The chain runs to 430 residues: Mitochondrial distribution and morphology protein 12 (430 aa).

An SMP-LTD domain is found at 1–430 (MSIDIDWERA…VYPSFWTFLI (430 aa)). 3 disordered regions span residues 61 to 117 (DLSD…YESN), 177 to 276 (TPLG…RMRE), and 352 to 377 (MGPETAGGGGGGDTSEPNSSRRKPSS). The span at 69–82 (FYEDDDENFSDSSE) shows a compositional bias: acidic residues. Positions 85-96 (SPTREPVDRYGN) are enriched in basic and acidic residues. 2 stretches are compositionally biased toward polar residues: residues 211–233 (SAQSRPSTANTGNTLPSRDSMSI) and 241–251 (ASQGMPNNQGQ). Basic and acidic residues predominate over residues 265–276 (PLDDTPPRRMRE).

It belongs to the MDM12 family. Component of the ER-mitochondria encounter structure (ERMES) or MDM complex, composed of MMM1, MDM10, MDM12 and MDM34. An MMM1 homodimer associates with one molecule of MDM12 on each side in a pairwise head-to-tail manner, and the SMP-LTD domains of MMM1 and MDM12 generate a continuous hydrophobic tunnel for phospholipid trafficking.

The protein localises to the mitochondrion outer membrane. Its subcellular location is the endoplasmic reticulum membrane. Component of the ERMES/MDM complex, which serves as a molecular tether to connect the endoplasmic reticulum (ER) and mitochondria. Components of this complex are involved in the control of mitochondrial shape and protein biogenesis, and function in nonvesicular lipid trafficking between the ER and mitochondria. MDM12 is required for the interaction of the ER-resident membrane protein MMM1 and the outer mitochondrial membrane-resident beta-barrel protein MDM10. The MDM12-MMM1 subcomplex functions in the major beta-barrel assembly pathway that is responsible for biogenesis of all mitochondrial outer membrane beta-barrel proteins, and acts in a late step after the SAM complex. The MDM10-MDM12-MMM1 subcomplex further acts in the TOM40-specific pathway after the action of the MDM12-MMM1 complex. Essential for establishing and maintaining the structure of mitochondria and maintenance of mtDNA nucleoids. In Ajellomyces capsulatus (strain G186AR / H82 / ATCC MYA-2454 / RMSCC 2432) (Darling's disease fungus), this protein is Mitochondrial distribution and morphology protein 12.